A 128-amino-acid polypeptide reads, in one-letter code: Entry-fusion complex protein OPG094 (128 aa).

Residues 1–30 (MENVPNVYFNPVFIEPTFKHSLLSVYKHRL) lie on the Intravirion side of the membrane. Residues 31-51 (IVLFEVFVVFILIYVFFRSEL) form a helical; Signal-anchor for type III membrane protein membrane-spanning segment. Residues 52–107 (NMFFMPKRKIPDPIDRLRRANLACEDDKLMIYGLPWMTTQTSALSINSKPIVYKDC) lie on the Virion surface side of the membrane. Cysteines 75 and 107 form a disulfide.

Belongs to the orthopoxvirus OPG099 family. In terms of assembly, interacts with OPG086. Component of the entry fusion complex (EFC) composed of OPG053, OPG076, OPG086, OPG094, OPG095, OPG099, OPG107, OPG143, OPG104J5, OPG147 and OPG155. Except for OPG095 and OPG053, each of the EFC proteins is required for assembly or stability of the complex. Post-translationally, most cysteines are linked by disulfide bonds. They are created by the viral disulfide bond formation pathway, a poxvirus-specific redox pathway that operates on the cytoplasmic side of the MV membranes. In terms of processing, unglycosylated because produced in viral factories instead of the classic ER -Golgi route.

The protein resides in the virion membrane. Component of the entry fusion complex (EFC), which consists of 11 proteins. During cell infection, this complex mediates entry of the virion core into the host cytoplasm by a two-step mechanism consisting of lipid mixing of the viral and cellular membranes and subsequent pore formation. This is Entry-fusion complex protein OPG094 (OPG099) from Vaccinia virus (strain Copenhagen) (VACV).